We begin with the raw amino-acid sequence, 675 residues long: Methionine--tRNA ligase (675 aa).

Positions 15–25 (PYANGSIHLGH) match the 'HIGH' region motif. Zn(2+)-binding residues include Cys-146, Cys-149, Cys-159, and Cys-162. The 'KMSKS' region signature appears at 332–336 (KMSKS). Lys-335 provides a ligand contact to ATP. The tRNA-binding domain occupies 573–675 (DFAKVDMRIA…SGAQPGMQVK (103 aa)).

This sequence belongs to the class-I aminoacyl-tRNA synthetase family. MetG type 1 subfamily. Homodimer. The cofactor is Zn(2+).

The protein resides in the cytoplasm. The enzyme catalyses tRNA(Met) + L-methionine + ATP = L-methionyl-tRNA(Met) + AMP + diphosphate. Functionally, is required not only for elongation of protein synthesis but also for the initiation of all mRNA translation through initiator tRNA(fMet) aminoacylation. The protein is Methionine--tRNA ligase of Yersinia pseudotuberculosis serotype IB (strain PB1/+).